The sequence spans 155 residues: Endoribonuclease YbeY (155 aa).

Residues histidine 114, histidine 118, and histidine 124 each contribute to the Zn(2+) site.

The protein belongs to the endoribonuclease YbeY family. Zn(2+) serves as cofactor.

The protein localises to the cytoplasm. In terms of biological role, single strand-specific metallo-endoribonuclease involved in late-stage 70S ribosome quality control and in maturation of the 3' terminus of the 16S rRNA. The polypeptide is Endoribonuclease YbeY (Shigella flexneri serotype 5b (strain 8401)).